Here is a 690-residue protein sequence, read N- to C-terminus: MARDFPLERVRNIGIAAHIDAGKTTTTERILFYSGVVHKIGEVHDGAAVTDWMAQERERGITITAAAISTSWQDHRINIIDTPGHVDFTIEVERSMRVLDGVIAVFCAVGGVQPQSETVWRQADRYSVPRMVFVNKMDRTGADFLKVHGQIKDRLKANAVPIQLPIGAEGDLSGIIDLVGNKAYIYKNDLGTDIEEAEIPAEMADEAAEWRATLMETIAETDEALIEKFLETGELSTEELKKGIREGVLKHGLVPMLCGSAFKNKGVQLVLDAVIDYLPAPVDVPPIQGVLPDGKEAVRPSDDKAPFSALAFKVMADPYGKLTFVRMYSGILEKGSYVLNSTKGEKERISRLVVLKADDREEVDALRAGDLGAVLGLKNTTTGDTLCTQDDPIVLETLFIPEPVISVAVEPKTKGDMEKLSKALVSLAEEDPTFRVNTDSETGQTVIAGMGELHLEILVDRMLREFKVEANIGAPQVSYRETIRGSAGGEGKFSRQTGGKGQYGHVVIEMEPGEPGSGFEFVNKIVGGIVPKEYIKPAEQGMRETCESGVIAGYPLIDVRCTLVHGSYHDVDSSEMAFKIAGSMAFKDGVKKCNPVLLEPMMKVEVEVPEDFLGSIIGDLSSRRGQVEGQGVEDGTSKISAKVPLAEMFGYATELRSMTQGRGIFSMEFDNYAEVPRNVAEAIISKNQGN.

Residues 8–282 (ERVRNIGIAA…AVIDYLPAPV (275 aa)) enclose the tr-type G domain. GTP contacts are provided by residues 17–24 (AHIDAGKT), 81–85 (DTPGH), and 135–138 (NKMD).

This sequence belongs to the TRAFAC class translation factor GTPase superfamily. Classic translation factor GTPase family. EF-G/EF-2 subfamily.

Its subcellular location is the cytoplasm. Catalyzes the GTP-dependent ribosomal translocation step during translation elongation. During this step, the ribosome changes from the pre-translocational (PRE) to the post-translocational (POST) state as the newly formed A-site-bound peptidyl-tRNA and P-site-bound deacylated tRNA move to the P and E sites, respectively. Catalyzes the coordinated movement of the two tRNA molecules, the mRNA and conformational changes in the ribosome. The protein is Elongation factor G of Parasynechococcus marenigrum (strain WH8102).